Consider the following 139-residue polypeptide: Large ribosomal subunit protein uL13 (139 aa).

It belongs to the universal ribosomal protein uL13 family. In terms of assembly, part of the 50S ribosomal subunit.

This protein is one of the early assembly proteins of the 50S ribosomal subunit, although it is not seen to bind rRNA by itself. It is important during the early stages of 50S assembly. This is Large ribosomal subunit protein uL13 from Aliarcobacter butzleri (strain RM4018) (Arcobacter butzleri).